A 99-amino-acid polypeptide reads, in one-letter code: NADH-quinone oxidoreductase subunit K (99 aa).

3 helical membrane passes run 3 to 23 (PENY…GVLI), 28 to 48 (IIVF…FVTF), and 59 to 79 (VFAF…LAII).

It belongs to the complex I subunit 4L family. As to quaternary structure, NDH-1 is composed of 14 different subunits. Subunits NuoA, H, J, K, L, M, N constitute the membrane sector of the complex.

Its subcellular location is the cell membrane. The enzyme catalyses a quinone + NADH + 5 H(+)(in) = a quinol + NAD(+) + 4 H(+)(out). Functionally, NDH-1 shuttles electrons from NADH, via FMN and iron-sulfur (Fe-S) centers, to quinones in the respiratory chain. The immediate electron acceptor for the enzyme in this species is believed to be a menaquinone. Couples the redox reaction to proton translocation (for every two electrons transferred, four hydrogen ions are translocated across the cytoplasmic membrane), and thus conserves the redox energy in a proton gradient. This chain is NADH-quinone oxidoreductase subunit K, found in Rhodococcus jostii (strain RHA1).